Reading from the N-terminus, the 700-residue chain is Serine/threonine-protein kinase WNK1 (700 aa).

The Protein kinase domain occupies 24–281; that stretch reads GRYNEVLGKG…ARELLDDPFL (258 aa). ATP-binding positions include 104–107 and lysine 154; that span reads TELF. The active-site Proton acceptor is aspartate 171. Low complexity predominate over residues 314–339; that stretch reads NYPSNSSSLNRQYSNGNYPSNSSSLN. Disordered stretches follow at residues 314–345, 551–575, and 647–666; these read NYPS…YSNG, ESRE…EVLY, and ESGE…SVSG. The segment covering 551–565 has biased composition (basic and acidic residues); sequence ESRELSSIDSGHNHS. Residues 566 to 575 are compositionally biased toward acidic residues; that stretch reads EEEEEEEVLY.

The protein belongs to the protein kinase superfamily. Ser/Thr protein kinase family. WNK subfamily. Post-translationally, autophosphorylated.

It carries out the reaction L-seryl-[protein] + ATP = O-phospho-L-seryl-[protein] + ADP + H(+). The catalysed reaction is L-threonyl-[protein] + ATP = O-phospho-L-threonyl-[protein] + ADP + H(+). Regulates flowering time by modulating the photoperiod pathway. Phosphorylates APRR3. This chain is Serine/threonine-protein kinase WNK1 (WNK1), found in Arabidopsis thaliana (Mouse-ear cress).